A 154-amino-acid polypeptide reads, in one-letter code: Low molecular weight protein-tyrosine-phosphatase PtpA (154 aa).

Residue C8 is the Nucleophile of the active site. Residue R14 is part of the active site. Residue D120 is the Proton donor of the active site.

It belongs to the low molecular weight phosphotyrosine protein phosphatase family. As to quaternary structure, interacts with host CORO1A. In terms of processing, phosphorylations at Tyr-122 and Tyr-123 are essential for phosphatase activity.

The protein resides in the secreted. The enzyme catalyses O-phospho-L-tyrosyl-[protein] + H2O = L-tyrosyl-[protein] + phosphate. In terms of biological role, secreted tyrosine phosphatase that plays a critical role during infection as a bacterial effector protein that counteracts host defenses. Required for intramacrophage survival. The sequence is that of Low molecular weight protein-tyrosine-phosphatase PtpA (ptpA) from Staphylococcus aureus (strain MRSA252).